A 1072-amino-acid chain; its full sequence is Zn(2)-C6 fungal-type transcription factor FTF2 (1072 aa).

The zn(2)-C6 fungal-type DNA-binding region spans 179 to 206 (CIACRRKKIRCSGEKPACKHCLRSRIPC).

Its subcellular location is the nucleus. In terms of biological role, zn(2)-C6 fungal-type transcription factor that has a role in conidia production and also in plant colonization. Acts as a negative regulator of the production of macroconidia and is required for full virulence and the positive regulation of SIX effectors. In addition, FTF2 is also involved in the regulation of class II hydrophobins FOXG_02746 and FOXG_02748 likely required for plant colonization. The protein is Zn(2)-C6 fungal-type transcription factor FTF2 of Fusarium oxysporum f. sp. lycopersici (strain 4287 / CBS 123668 / FGSC 9935 / NRRL 34936) (Fusarium vascular wilt of tomato).